Consider the following 393-residue polypeptide: MAAATLGQVWARKLLPVPWLLCGSKRCVSSIFKAADLQIQMTKEPQKKPAPSQALLFGKTFTDHMLMVEWNNKAGWGPPRIQPFQNLTLHPACSGLHYSLQLFEGLKAYKGGDQQVRLFRPWLNMDRMLRSARRLCLPDFDKQELLECIRQLIEVDKDWVPDGNGTSLYVRPVLIGNEPSLGVGMVTQALLYVILCPVGSYFPGDSMTPVSLLADPSFVRAWIGGVGDCKLGGNYGPTVAVQREAQKRGCEQVLWLYGPDHQLTEVGTMNIFVYWTHEDGVLELVTPPLNGVILPGVVRQSLLDLARTWGEFRVAERKVTMKELKRALEEGRVREVFGSGTACQVCPVHQILYEGKQLHIPTMENGPELILRFQKELKAIQYGASAHDWMFRV.

The N-terminal 27 residues, 1 to 27 (MAAATLGQVWARKLLPVPWLLCGSKRC), are a transit peptide targeting the mitochondrion. Y169 provides a ligand contact to substrate. K230 is modified (N6-(pyridoxal phosphate)lysine). K322 is subject to N6-acetyllysine.

It belongs to the class-IV pyridoxal-phosphate-dependent aminotransferase family. Homodimer. Requires pyridoxal 5'-phosphate as cofactor.

It is found in the mitochondrion. It catalyses the reaction L-leucine + 2-oxoglutarate = 4-methyl-2-oxopentanoate + L-glutamate. The catalysed reaction is L-isoleucine + 2-oxoglutarate = (S)-3-methyl-2-oxopentanoate + L-glutamate. It carries out the reaction L-valine + 2-oxoglutarate = 3-methyl-2-oxobutanoate + L-glutamate. Its function is as follows. Catalyzes the first reaction in the catabolism of the essential branched chain amino acids leucine, isoleucine, and valine. May also function as a transporter of branched chain alpha-keto acids. This is Branched-chain-amino-acid aminotransferase, mitochondrial (Bcat2) from Mus musculus (Mouse).